Consider the following 242-residue polypeptide: Leucyl/phenylalanyl-tRNA--protein transferase (242 aa).

The protein belongs to the L/F-transferase family.

Its subcellular location is the cytoplasm. It carries out the reaction N-terminal L-lysyl-[protein] + L-leucyl-tRNA(Leu) = N-terminal L-leucyl-L-lysyl-[protein] + tRNA(Leu) + H(+). The catalysed reaction is N-terminal L-arginyl-[protein] + L-leucyl-tRNA(Leu) = N-terminal L-leucyl-L-arginyl-[protein] + tRNA(Leu) + H(+). The enzyme catalyses L-phenylalanyl-tRNA(Phe) + an N-terminal L-alpha-aminoacyl-[protein] = an N-terminal L-phenylalanyl-L-alpha-aminoacyl-[protein] + tRNA(Phe). Functions in the N-end rule pathway of protein degradation where it conjugates Leu, Phe and, less efficiently, Met from aminoacyl-tRNAs to the N-termini of proteins containing an N-terminal arginine or lysine. The sequence is that of Leucyl/phenylalanyl-tRNA--protein transferase from Edwardsiella ictaluri (strain 93-146).